A 386-amino-acid chain; its full sequence is Heat-inducible transcription repressor HrcA (386 aa).

It belongs to the HrcA family.

Its function is as follows. Negative regulator of class I heat shock genes (grpE-dnaK-dnaJ and groELS operons). Prevents heat-shock induction of these operons. The sequence is that of Heat-inducible transcription repressor HrcA from Chlamydia felis (strain Fe/C-56) (Chlamydophila felis).